The chain runs to 233 residues: Ribose-5-phosphate isomerase A (233 aa).

Substrate-binding positions include 31–34 (SGST), 87–90 (DGAD), and 100–103 (KGGG). The Proton acceptor role is filled by glutamate 109. Lysine 127 contacts substrate.

The protein belongs to the ribose 5-phosphate isomerase family. As to quaternary structure, homodimer.

The enzyme catalyses aldehydo-D-ribose 5-phosphate = D-ribulose 5-phosphate. It functions in the pathway carbohydrate degradation; pentose phosphate pathway; D-ribose 5-phosphate from D-ribulose 5-phosphate (non-oxidative stage): step 1/1. In terms of biological role, catalyzes the reversible conversion of ribose-5-phosphate to ribulose 5-phosphate. This Chlamydia caviae (strain ATCC VR-813 / DSM 19441 / 03DC25 / GPIC) (Chlamydophila caviae) protein is Ribose-5-phosphate isomerase A.